The chain runs to 363 residues: Phospho-N-acetylmuramoyl-pentapeptide-transferase (363 aa).

A run of 10 helical transmembrane segments spans residues 3-23, 55-75, 76-96, 116-136, 158-178, 190-210, 237-257, 261-281, 286-306, and 340-360; these read TVLI…PLYI, VVII…TGAL, PTVS…VGFL, LAGQ…FPAA, LAVF…LIIT, GLDG…VLIC, LAVV…WNAS, IFMG…LAIL, ILLV…ILQV, and FWII…AEWV.

The protein belongs to the glycosyltransferase 4 family. MraY subfamily. The cofactor is Mg(2+).

Its subcellular location is the cell membrane. The catalysed reaction is UDP-N-acetyl-alpha-D-muramoyl-L-alanyl-gamma-D-glutamyl-meso-2,6-diaminopimeloyl-D-alanyl-D-alanine + di-trans,octa-cis-undecaprenyl phosphate = di-trans,octa-cis-undecaprenyl diphospho-N-acetyl-alpha-D-muramoyl-L-alanyl-D-glutamyl-meso-2,6-diaminopimeloyl-D-alanyl-D-alanine + UMP. The protein operates within cell wall biogenesis; peptidoglycan biosynthesis. Catalyzes the initial step of the lipid cycle reactions in the biosynthesis of the cell wall peptidoglycan: transfers peptidoglycan precursor phospho-MurNAc-pentapeptide from UDP-MurNAc-pentapeptide onto the lipid carrier undecaprenyl phosphate, yielding undecaprenyl-pyrophosphoryl-MurNAc-pentapeptide, known as lipid I. The sequence is that of Phospho-N-acetylmuramoyl-pentapeptide-transferase from Kineococcus radiotolerans (strain ATCC BAA-149 / DSM 14245 / SRS30216).